The following is a 262-amino-acid chain: Flap endonuclease Xni (262 aa).

Residue Asp-105 coordinates Mg(2+). A 5'-3' exonuclease domain is found at 162-257 (ERSQFLDLMA…FRVIDSPPEK (96 aa)). K(+) is bound by residues Leu-172, Ala-173, Pro-181, Ile-183, and Ile-186. Residues 185 to 190 (GIGPKS) are interaction with DNA.

Belongs to the Xni family. The cofactor is Mg(2+). It depends on K(+) as a cofactor.

In terms of biological role, has flap endonuclease activity. During DNA replication, flap endonucleases cleave the 5'-overhanging flap structure that is generated by displacement synthesis when DNA polymerase encounters the 5'-end of a downstream Okazaki fragment. This is Flap endonuclease Xni from Shewanella baltica (strain OS223).